The following is a 435-amino-acid chain: Serine/threonine-protein kinase 40 (435 aa).

A Protein kinase domain is found at 35-332; that stretch reads FILGPRLGNS…DVLEALSAII (298 aa). ATP-binding positions include 41-49 and K66; that span reads LGNSPVPSI. The active-site Proton acceptor is D197.

This sequence belongs to the protein kinase superfamily. CAMK Ser/Thr protein kinase family.

The protein resides in the nucleus. It is found in the cytoplasm. It carries out the reaction L-seryl-[protein] + ATP = O-phospho-L-seryl-[protein] + ADP + H(+). It catalyses the reaction L-threonyl-[protein] + ATP = O-phospho-L-threonyl-[protein] + ADP + H(+). Its function is as follows. May be a negative regulator of NF-kappa-B and p53-mediated gene transcription. The protein is Serine/threonine-protein kinase 40 (Stk40) of Rattus norvegicus (Rat).